We begin with the raw amino-acid sequence, 117 residues long: Photosystem II reaction center Psb28 protein (117 aa).

This sequence belongs to the Psb28 family. As to quaternary structure, part of the photosystem II complex.

Its subcellular location is the cellular thylakoid membrane. The sequence is that of Photosystem II reaction center Psb28 protein from Prochlorococcus marinus (strain MIT 9301).